Reading from the N-terminus, the 102-residue chain is Large ribosomal subunit protein bL21 (102 aa).

This sequence belongs to the bacterial ribosomal protein bL21 family. Part of the 50S ribosomal subunit. Contacts protein L20.

Its function is as follows. This protein binds to 23S rRNA in the presence of protein L20. In Lachnoclostridium phytofermentans (strain ATCC 700394 / DSM 18823 / ISDg) (Clostridium phytofermentans), this protein is Large ribosomal subunit protein bL21.